Here is a 651-residue protein sequence, read N- to C-terminus: Protein transport protein SEC9 (651 aa).

Disordered regions lie at residues 1-22 (MGLKKFFKIKPPEEATPEQNKD), 53-299 (AEDK…QAPM), and 313-332 (RNSEVDLNEEPRTGEFDFEE). A phosphoserine mark is found at S79 and S92. Positions 86-112 (NEATAGSNRGSSGTQDLGNGAESNSMQ) are enriched in polar residues. The segment covering 120-129 (DDYRYDDDPY) has biased composition (basic and acidic residues). Composition is skewed to polar residues over residues 157–218 (GTSL…SLDQ) and 244–284 (DSNT…ANPY). S186, S190, S213, S271, and S273 each carry phosphoserine. Residues 285-296 (SSRSVRQPQSQQ) are compositionally biased toward low complexity. A compositionally biased stretch (basic and acidic residues) spans 313–327 (RNSEVDLNEEPRTGE). S315 is subject to Phosphoserine. Phosphothreonine is present on T355. A Phosphoserine modification is found at S359. T-SNARE coiled-coil homology domains lie at 434–496 (KFTK…VAEL) and 588–650 (DEME…LAGI).

Belongs to the SNAP-25 family. In terms of assembly, interacts with SRO7 and SRO77.

Functionally, component of a SNARE complex that may be the effector of SEC4 function in exocytosis. This chain is Protein transport protein SEC9 (SEC9), found in Saccharomyces cerevisiae (strain ATCC 204508 / S288c) (Baker's yeast).